A 93-amino-acid chain; its full sequence is MSQFSVLNVGFGNIVLVSKIVSIIHSDSASAKRIRNEAKSNNSLIDATQGKKTRSIIVTDSNHLILSNLRVESLAKRIESSDNSIASEEEDLD.

It belongs to the RemA family.

The polypeptide is Putative regulatory protein LBL_1834 (Leptospira borgpetersenii serovar Hardjo-bovis (strain L550)).